A 333-amino-acid polypeptide reads, in one-letter code: Putative fimbrium anchoring subunit Fim4B (333 aa).

Residues 1 to 20 form the signal peptide; it reads MRNTRYGFLVLLSSLLMLTG. A lipid anchor (N-palmitoyl cysteine) is attached at Cys-21. Cys-21 is lipidated: S-diacylglycerol cysteine. The interval 274–333 is disordered; that stretch reads ENAGTGEDGKPTPPPEIELPPDDKIEVDKPETPPNPDGGGGMGGNVDGWGPEDNVELPVN. The span at 294 to 304 shows a compositional bias: basic and acidic residues; that stretch reads PDDKIEVDKPE. Over residues 310-320 the composition is skewed to gly residues; it reads DGGGGMGGNVD.

The protein belongs to the bacteroidetes fimbrillin superfamily. FimB/Mfa2 family.

The protein resides in the cell outer membrane. Its function is as follows. Putative fimbrium anchoring subunit. This Bacteroides ovatus (strain ATCC 8483 / DSM 1896 / JCM 5824 / BCRC 10623 / CCUG 4943 / NCTC 11153) protein is Putative fimbrium anchoring subunit Fim4B.